The following is a 125-amino-acid chain: SOSS complex subunit C homolog B (125 aa).

2 disordered regions span residues 44 to 73 (PAPQLLGQPTTTTATPDLVSTNSTPPRAAF) and 105 to 125 (PATPSTTTPPITPIANANNPK).

Belongs to the SOSS-C family.

The polypeptide is SOSS complex subunit C homolog B (Drosophila willistoni (Fruit fly)).